The chain runs to 31 residues: Fibrinogen beta chain (31 aa).

The span at 1–10 (HYYDDTDEEE) shows a compositional bias: acidic residues. The interval 1–31 (HYYDDTDEEERIVSTVDARGHRPLDKKREEA) is disordered. Position 2 is a sulfotyrosine; partial (tyrosine 2). Tyrosine 3 bears the Sulfotyrosine mark. Residues 18 to 31 (ARGHRPLDKKREEA) are compositionally biased toward basic and acidic residues.

In terms of assembly, heterohexamer; disulfide linked. Contains 2 sets of 3 non-identical chains (alpha, beta and gamma). The 2 heterotrimers are in head to head conformation with the N-termini in a small central domain. In terms of processing, conversion of fibrinogen to fibrin is triggered by thrombin, which cleaves fibrinopeptides A and B from alpha and beta chains, and thus exposes the N-terminal polymerization sites responsible for the formation of the soft clot.

The protein localises to the secreted. Its function is as follows. Cleaved by the protease thrombin to yield monomers which, together with fibrinogen alpha (FGA) and fibrinogen gamma (FGG), polymerize to form an insoluble fibrin matrix. Fibrin has a major function in hemostasis as one of the primary components of blood clots. In addition, functions during the early stages of wound repair to stabilize the lesion and guide cell migration during re-epithelialization. Was originally thought to be essential for platelet aggregation, based on in vitro studies using anticoagulated blood. However subsequent studies have shown that it is not absolutely required for thrombus formation in vivo. Enhances expression of SELP in activated platelets. Maternal fibrinogen is essential for successful pregnancy. Fibrin deposition is also associated with infection, where it protects against IFNG-mediated hemorrhage. May also facilitate the antibacterial immune response via both innate and T-cell mediated pathways. In Canis lupus familiaris (Dog), this protein is Fibrinogen beta chain (FGB).